Consider the following 423-residue polypeptide: Histidine--tRNA ligase (423 aa).

Belongs to the class-II aminoacyl-tRNA synthetase family. As to quaternary structure, homodimer.

It is found in the cytoplasm. It carries out the reaction tRNA(His) + L-histidine + ATP = L-histidyl-tRNA(His) + AMP + diphosphate + H(+). This chain is Histidine--tRNA ligase, found in Haemophilus ducreyi (strain 35000HP / ATCC 700724).